Consider the following 693-residue polypeptide: Homoaconitase, mitochondrial (693 aa).

Residues 1 to 17 (MFRVQRLRMFSTSRALY) constitute a mitochondrion transit peptide. [4Fe-4S] cluster contacts are provided by Cys338, Cys405, and Cys408.

It belongs to the aconitase/IPM isomerase family. [4Fe-4S] cluster is required as a cofactor.

The protein localises to the mitochondrion. It catalyses the reaction (2R,3S)-homoisocitrate = cis-homoaconitate + H2O. It functions in the pathway amino-acid biosynthesis; L-lysine biosynthesis via AAA pathway; L-alpha-aminoadipate from 2-oxoglutarate: step 3/5. In terms of biological role, catalyzes the reversible hydration of cis-homoaconitate to (2R,3S)-homoisocitrate, a step in the alpha-aminoadipate pathway for lysine biosynthesis. The sequence is that of Homoaconitase, mitochondrial (LYS4) from Kluyveromyces lactis (strain ATCC 8585 / CBS 2359 / DSM 70799 / NBRC 1267 / NRRL Y-1140 / WM37) (Yeast).